The primary structure comprises 112 residues: ANEACLKMLLEIGSVKRIPEFIARAKDKNDPFRLMGFGHRVYKNYDPRAKIMQKTCHEVLKELNIQNDPLLDIAIELEKIALNDEYFVEKKLYPNVDFYSGITLKALGFPTE.

Residues H39 and D97 contribute to the active site.

Belongs to the citrate synthase family.

The catalysed reaction is oxaloacetate + acetyl-CoA + H2O = citrate + CoA + H(+). Its pathway is carbohydrate metabolism; tricarboxylic acid cycle; isocitrate from oxaloacetate: step 1/2. The polypeptide is Citrate synthase (gltA) (Bartonella vinsonii subsp. berkhoffii).